An 84-amino-acid chain; its full sequence is Toxin BmKaTx16 (84 aa).

The first 19 residues, M1–S19, serve as a signal peptide directing secretion. Positions R21–H83 constitute an LCN-type CS-alpha/beta domain. 4 cysteine pairs are disulfide-bonded: C31/C82, C35/C55, C41/C65, and C45/C67. R84 is a propeptide (removed by a carboxypeptidase).

Belongs to the long (4 C-C) scorpion toxin superfamily. Sodium channel inhibitor family. Alpha subfamily. Expressed by the venom gland.

It localises to the secreted. In terms of biological role, alpha toxins bind voltage-independently at site-3 of sodium channels (Nav) and inhibit the inactivation of the activated channels, thereby blocking neuronal transmission. In Olivierus martensii (Manchurian scorpion), this protein is Toxin BmKaTx16.